The following is a 615-amino-acid chain: Dihydroxy-acid dehydratase (615 aa).

Aspartate 81 contributes to the Mg(2+) binding site. Cysteine 122 contacts [2Fe-2S] cluster. Residues aspartate 123 and lysine 124 each coordinate Mg(2+). Lysine 124 carries the N6-carboxylysine modification. Cysteine 197 lines the [2Fe-2S] cluster pocket. Position 494 (glutamate 494) interacts with Mg(2+). The Proton acceptor role is filled by serine 520.

This sequence belongs to the IlvD/Edd family. Homodimer. Requires [2Fe-2S] cluster as cofactor. It depends on Mg(2+) as a cofactor.

It catalyses the reaction (2R)-2,3-dihydroxy-3-methylbutanoate = 3-methyl-2-oxobutanoate + H2O. The catalysed reaction is (2R,3R)-2,3-dihydroxy-3-methylpentanoate = (S)-3-methyl-2-oxopentanoate + H2O. It functions in the pathway amino-acid biosynthesis; L-isoleucine biosynthesis; L-isoleucine from 2-oxobutanoate: step 3/4. The protein operates within amino-acid biosynthesis; L-valine biosynthesis; L-valine from pyruvate: step 3/4. In terms of biological role, functions in the biosynthesis of branched-chain amino acids. Catalyzes the dehydration of (2R,3R)-2,3-dihydroxy-3-methylpentanoate (2,3-dihydroxy-3-methylvalerate) into 2-oxo-3-methylpentanoate (2-oxo-3-methylvalerate) and of (2R)-2,3-dihydroxy-3-methylbutanoate (2,3-dihydroxyisovalerate) into 2-oxo-3-methylbutanoate (2-oxoisovalerate), the penultimate precursor to L-isoleucine and L-valine, respectively. The sequence is that of Dihydroxy-acid dehydratase from Salinispora arenicola (strain CNS-205).